A 463-amino-acid chain; its full sequence is T-box transcription factor TBX1-B (463 aa).

2 disordered regions span residues 39–58 (SPSP…PCSA) and 75–102 (GASS…APVK). Residues 75-96 (GASSSSCASSTPGSGSTGSSSG) show a composition bias toward low complexity. Positions 119-297 (LWDEFNQLGT…SNPFAKGFRD (179 aa)) form a DNA-binding region, T-box. Disordered regions lie at residues 320–343 (RSRN…RREY) and 367–406 (SPSL…HHHP). Polar residues predominate over residues 323 to 332 (NPVSSPPQNG). Over residues 333-343 (SDKDGDGRREY) the composition is skewed to basic and acidic residues. Residues 367-380 (SPSLPVPGGLVPLS) show a composition bias toward low complexity. The short motif at 420–431 (KTRPAPYPLPSI) is the Nuclear localization signal element.

As to quaternary structure, binds DNA as a dimer. Interacts with dscr6/ripply3.

It localises to the nucleus. Probable transcriptional regulator involved in developmental processes. Binds to the palindromic T site 5'-TTCACACCTAGGTGTGAA-3' DNA sequence. Induces pre-placodal ectoderm (PPE) gene expression in regions where RIPPLY3 is absent. Plays a role in the formation of the anteroposterior (AP) axis during embryonic development; required to establish the posterolateral border of the pre-placodal ectoderm (PPE) acting downstream of the retinoic acid receptor (RAR) signaling. Its function is as follows. Probable transcriptional regulator involved in developmental processes. Binds to the palindromic T site 5'-TTCACACCTAGGTGTGAA-3' DNA sequence. Is required for normal development of the pharyngeal arch arteries. This chain is T-box transcription factor TBX1-B (tbx1-b), found in Xenopus laevis (African clawed frog).